Reading from the N-terminus, the 635-residue chain is Endo-1,4-beta-xylanase B (635 aa).

The GH10 domain maps to 1–337 (MNLKTAYEPY…KEAYYAVLKA (337 aa)). The Proton donor role is filled by Glu-150. Glu-255 serves as the catalytic Nucleophile.

It belongs to the glycosyl hydrolase 10 (cellulase F) family.

The enzyme catalyses Endohydrolysis of (1-&gt;4)-beta-D-xylosidic linkages in xylans.. Its pathway is glycan degradation; xylan degradation. In terms of biological role, b.fibrisolvens is located in the rumen of ruminant animals, where it contributes to the animal's digestion of plant material by hydrolyzing hemicellulose with its xylanases. The protein is Endo-1,4-beta-xylanase B (xynB) of Butyrivibrio fibrisolvens.